The chain runs to 238 residues: 2,3,4,5-tetrahydropyridine-2,6-dicarboxylate N-acetyltransferase (238 aa).

It belongs to the transferase hexapeptide repeat family. DapH subfamily.

The enzyme catalyses (S)-2,3,4,5-tetrahydrodipicolinate + acetyl-CoA + H2O = L-2-acetamido-6-oxoheptanedioate + CoA. It functions in the pathway amino-acid biosynthesis; L-lysine biosynthesis via DAP pathway; LL-2,6-diaminopimelate from (S)-tetrahydrodipicolinate (acetylase route): step 1/3. Its function is as follows. Catalyzes the transfer of an acetyl group from acetyl-CoA to tetrahydrodipicolinate. The chain is 2,3,4,5-tetrahydropyridine-2,6-dicarboxylate N-acetyltransferase from Thermotoga neapolitana (strain ATCC 49049 / DSM 4359 / NBRC 107923 / NS-E).